The chain runs to 613 residues: Protein ECM3 (613 aa).

4 consecutive transmembrane segments (helical) span residues 10 to 30, 74 to 94, 106 to 126, and 143 to 163; these read IWASVRPIIKIYLIIGVGFGL, GIICLTSVILFATGLGFAFIV, GGILAGGMFPNISDLPIAYLQ, and VANVIIFLAMFLICVFNLGGF. The segment at 177-256 is disordered; the sequence is DEENTLTNDD…PAIDDRSSNS (80 aa). Polar residues-rich tracts occupy residues 187 to 206 and 213 to 226; these read SAQQPTQPIEGNSSSSSNQD and ESTVPNSSQASYIS. Phosphoserine is present on residues Ser291 and Ser338. The segment at 345–366 is disordered; the sequence is RRRKSSISSQGAPSVLQADGTI. 4 helical membrane-spanning segments follow: residues 432 to 452, 471 to 491, 546 to 566, and 587 to 607; these read MAVILALIIAFIPWVKALFVT, FIMDFTSYVGAASVPFGLILL, MLLFVTAITWNLPTMTTLIYF, and FLMLQYPLMVVSLPFLVSYFI.

It localises to the endoplasmic reticulum membrane. In terms of biological role, may be involved in cell wall organization and biogenesis. In Saccharomyces cerevisiae (strain ATCC 204508 / S288c) (Baker's yeast), this protein is Protein ECM3 (ECM3).